Here is a 1020-residue protein sequence, read N- to C-terminus: Nucleotide-binding oligomerization domain-containing protein 2 (1020 aa).

2 CARD domains span residues 6 to 104 and 106 to 200; these read CDMC…GSWD and HSLH…AECQ. An ATG16L1-binding motif motif is present at residues 43–57; sequence WDVLSREDYEGLSLP. The ADP site is built by Thr219, Tyr232, Thr233, Gly282, Ser283, Gly284, Lys285, Ser286, and Thr287. Residues 221-254 form a required for CARD9 binding region; sequence DGSENLCLEDIYTENILELQTEVGTAGALQKSPA. The region spanning 273–600 is the NACHT domain; the sequence is DTILVVGEAG…AAFYLAVSAD (328 aa). Cys375 is lipidated: S-palmitoyl cysteine. His583 is a binding site for ADP. LRR repeat units follow at residues 685–709, 726–749, 766–792, 794–817, 822–845, 850–873, 906–929, 934–962, 963–985, and 1005–1019; these read ARAR…VPGE, LYEM…HLKL, LQHL…QLRP, LGVC…TLVE, CEQL…SMAK, KQNF…VLAQ, HQNL…ALAL, NKSL…LKRN, STLK…ALLQ, and LEEI…ARLL.

Belongs to the NOD1-NOD2 family. As to quaternary structure, homooligomer: homooligomerizes following muramyl dipeptide (MDP)-binding, promoting RIPK2 recruitment. Interacts (via CARD domain) with RIPK2 (via CARD domain). Following RIPK2 recruitment, RIPK2 homooligomerizes via its CARD domain and forms long filaments named RIPosomes. Interacts (via CARD domain) with ubiquitin; inhibiting interaction with RIPK2. Component of a signaling complex consisting of ARHGEF2, NOD2 and RIPK2. Interacts with ANKRD17 (via N-terminus). Interacts with HSPA1A; the interaction enhances NOD2 stability. Interacts (via both CARD domains) with HSP90; the interaction enhances NOD2 stability. Interacts (via CARD domain) with SOCS3; the interaction promotes NOD2 degradation. Interacts (via CARD domain) with ERBIN; the interaction inhibits activation of NOD2. Interacts with MAPKBP1; the interaction is enhanced in the presence of muramyl dipeptide (MDP) and inhibits NOD2 homooligomerization and activation. Interacts with INAVA; the interaction takes place upon Pattern recognition receptor (PRR) stimulation. Interacts (via NACHT domain) with CARD9. Interacts (via CARD domain) with CASP1; this interaction leads to IL1B processing. Also interacts with CASP4. Interacts with NLRP1; this interaction is enhanced in the presence of muramyl dipeptide (MDP) and leads to increased IL1B release. Interacts with NLRP12; this interaction promotes degradation of NOD2 through the ubiquitin-proteasome pathway. Interacts with ANKHD1, C10orf67, CHMP5, DOCK7, ENTR1, KRT15, LDOC1, PPP1R12C, PPP2R3B, TRIM41 and VIM. Interacts with MAVS; interaction takes place following single-stranded RNA (ssRNA)-binding. Interacts with ATG16L1. Interacts with Irgm1; promoting Irgm1 'Lys-63'-linked polyubiquitination, which is required for interactions with the core autophagy factors. In terms of processing, palmitoylated by ZDHHC5; palmitoylation is required for proper recruitment to the bacterial entry site and hence for proper signaling upon cognate peptidoglycan detection. Palmitoylation promotes localization to the cell membrane. Palmitoylation protects from SQSTM1/p62-dependent autophagic degradation. Polyubiquitinated by TRIM27, leading to proteasome-mediated degradation. Polyubiquitinated and degraded following muramyl dipeptide (MDP) stimulation, conferring MDP tolerance and preventing septic shock. Post-translationally, degraded via selective autophagy following interaction with Irgm1. Irgm1 promotes NOD2-RIPK2 RIPosome recruitment to autophagosome membranes, promoting their SQSTM1/p62-dependent autophagic degradation. In terms of processing, O-glycosylated by OGT, O-GlcNAcylation increases protein stability. In terms of tissue distribution, expressed in monocytes, macrophages, dendritic cells, hepatocytes, preadipocytes, epithelial cells of oral cavity, lung and intestine. In intestine, highly expressed in ileal Paneth cells of the crypt and in intestinal stem cells. Also expressed in neurons of several brain regions including the hypothalamus.

It is found in the cell membrane. The protein localises to the basolateral cell membrane. The protein resides in the cytoplasm. Its subcellular location is the mitochondrion. Its activity is regulated as follows. ADP-binding promotes an inactive closed conformation. Pattern recognition receptor (PRR) that detects bacterial peptidoglycan fragments and other danger signals and plays an important role in gastrointestinal immunity. Specifically activated by muramyl dipeptide (MDP), a fragment of bacterial peptidoglycan found in every bacterial peptidoglycan type. NOD2 specifically recognizes and binds 6-O-phospho-MDP, the phosphorylated form of MDP, which is generated by NAGK. 6-O-phospho-MDP-binding triggers oligomerization that facilitates the binding and subsequent activation of the proximal adapter receptor-interacting RIPK2. Following recruitment, RIPK2 undergoes 'Met-1'- (linear) and 'Lys-63'-linked polyubiquitination by E3 ubiquitin-protein ligases XIAP, BIRC2, BIRC3 and the LUBAC complex, becoming a scaffolding protein for downstream effectors, triggering activation of the NF-kappa-B and MAP kinases signaling. This in turn leads to the transcriptional activation of hundreds of genes involved in immune response. Its ability to detect bacterial MDP plays a central role in maintaining the equilibrium between intestinal microbiota and host immune responses to control inflammation. An imbalance in this relationship results in dysbiosis, whereby pathogenic bacteria prevail on commensals, causing damage in the intestinal epithelial barrier as well as allowing bacterial invasion and inflammation. Acts as a regulator of appetite by sensing MDP in a subset of brain neurons: microbiota-derived MDP reach the brain, where they bind and activate NOD2 in inhibitory hypothalamic neurons, decreasing neuronal activity, thereby regulating satiety and body temperature. NOD2-dependent MDP-sensing of bacterial cell walls in the intestinal epithelial compartment contributes to sustained postnatal growth upon undernutrition. Also plays a role in antiviral response by acting as a sensor of single-stranded RNA (ssRNA) from viruses: upon ssRNA-binding, interacts with MAVS, leading to activation of interferon regulatory factor-3/IRF3 and expression of type I interferon. Also acts as a regulator of autophagy in dendritic cells via its interaction with ATG16L1, possibly by recruiting ATG16L1 at the site of bacterial entry. NOD2 activation in the small intestine crypt also contributes to intestinal stem cells survival and function: acts by promoting mitophagy via its association with ATG16L1. In addition to its main role in innate immunity, also regulates the adaptive immune system by acting as regulator of helper T-cell and regulatory T-cells (Tregs). Besides recognizing pathogens, also involved in the endoplasmic reticulum stress response: acts by sensing and binding to the cytosolic metabolite sphingosine-1-phosphate generated in response to endoplasmic reticulum stress, initiating an inflammation process that leads to activation of the NF-kappa-B and MAP kinases signaling. May also be involved in NLRP1 activation following activation by MDP, leading to CASP1 activation and IL1B release in macrophages. This chain is Nucleotide-binding oligomerization domain-containing protein 2, found in Mus musculus (Mouse).